The sequence spans 714 residues: Polynucleotide 5'-hydroxyl-kinase NOL9 (714 aa).

Ala-2 is subject to N-acetylalanine. Positions 31–47 (RRGRRRFGVLTRVELRR) match the Nucleolar localization signal motif. The interval 80–133 (ARSRPAPRSPPTPSVPPAPCTASATCSLLNPRNHSTPQSRAGRPVRKVSPNVTQ) is disordered. The span at 86–98 (PRSPPTPSVPPAP) shows a compositional bias: pro residues. Polar residues predominate over residues 107 to 118 (LLNPRNHSTPQS). At Ser-128 the chain carries Phosphoserine. 322–329 (GACDIGKS) contributes to the ATP binding site. An interaction with LAS1L region spans residues 495–714 (FTYEEKESSP…PRHKLRQRRK (220 aa)). Lys-500 participates in a covalent cross-link: Glycyl lysine isopeptide (Lys-Gly) (interchain with G-Cter in SUMO2). Residue Ser-502 is modified to Phosphoserine.

This sequence belongs to the Clp1 family. NOL9/GRC3 subfamily. As to quaternary structure, interacts with PELP1, WDR18 and SENP3. Interacts with LAS1L to form an ITS2 pre-rRNA endonuclease-kinase complex.

It localises to the nucleus. Its subcellular location is the nucleolus. It catalyses the reaction a 5'-end dephospho-2'-deoxyribonucleoside-DNA + ATP = a 5'-end 5'-phospho-2'-deoxyribonucleoside-DNA + ADP + H(+). The catalysed reaction is a 5'-end dephospho-ribonucleoside-RNA + ATP = a 5'-end 5'-phospho-ribonucleoside-RNA + ADP + H(+). Its function is as follows. Polynucleotide kinase that can phosphorylate the 5'-hydroxyl groups of single-stranded and double-stranded RNA and DNA substrates. Involved in rRNA processing and its kinase activity is required for the processing of the 32S precursor into 5.8S and 28S rRNAs, more specifically for the generation of the major 5.8S(S) form. Required for the efficient pre-rRNA processing of internal transcribed spacer 2 (ITS2). Associates with LAS1L to form an ITS2 pre-rRNA endonuclease-kinase complex and is responsible for the transport of this complex into the nucleolus. The sequence is that of Polynucleotide 5'-hydroxyl-kinase NOL9 from Mus musculus (Mouse).